The primary structure comprises 209 residues: Protein GrpE (209 aa).

Over residues 1–13 (MSNDSSKAKQNQV) the composition is skewed to polar residues. The disordered stretch occupies residues 1–33 (MSNDSSKAKQNQVDEAVEGEILTESEVETGNDE). A compositionally biased stretch (acidic residues) spans 15-31 (EAVEGEILTESEVETGN).

This sequence belongs to the GrpE family. In terms of assembly, homodimer.

It is found in the cytoplasm. Functionally, participates actively in the response to hyperosmotic and heat shock by preventing the aggregation of stress-denatured proteins, in association with DnaK and GrpE. It is the nucleotide exchange factor for DnaK and may function as a thermosensor. Unfolded proteins bind initially to DnaJ; upon interaction with the DnaJ-bound protein, DnaK hydrolyzes its bound ATP, resulting in the formation of a stable complex. GrpE releases ADP from DnaK; ATP binding to DnaK triggers the release of the substrate protein, thus completing the reaction cycle. Several rounds of ATP-dependent interactions between DnaJ, DnaK and GrpE are required for fully efficient folding. The sequence is that of Protein GrpE from Shewanella woodyi (strain ATCC 51908 / MS32).